Consider the following 203-residue polypeptide: Holliday junction branch migration complex subunit RuvA (203 aa).

Residues 1-61 (MIIYKYGKIM…EYTKVTYGFD (61 aa)) form a domain I region. Residues 62–139 (NFKELVIFED…KFMKKLTSDE (78 aa)) form a domain II region. The interval 140-147 (AAKIKVPA) is flexible linker. The segment at 147–203 (ASSENENKFLDTMKMLGFKQQQIKFALDKIELNDDIETCVENAIKLISQQQHETSRV) is domain III.

It belongs to the RuvA family. In terms of assembly, homotetramer. Forms an RuvA(8)-RuvB(12)-Holliday junction (HJ) complex. HJ DNA is sandwiched between 2 RuvA tetramers; dsDNA enters through RuvA and exits via RuvB. An RuvB hexamer assembles on each DNA strand where it exits the tetramer. Each RuvB hexamer is contacted by two RuvA subunits (via domain III) on 2 adjacent RuvB subunits; this complex drives branch migration. In the full resolvosome a probable DNA-RuvA(4)-RuvB(12)-RuvC(2) complex forms which resolves the HJ.

It is found in the cytoplasm. The RuvA-RuvB-RuvC complex processes Holliday junction (HJ) DNA during genetic recombination and DNA repair, while the RuvA-RuvB complex plays an important role in the rescue of blocked DNA replication forks via replication fork reversal (RFR). RuvA specifically binds to HJ cruciform DNA, conferring on it an open structure. The RuvB hexamer acts as an ATP-dependent pump, pulling dsDNA into and through the RuvAB complex. HJ branch migration allows RuvC to scan DNA until it finds its consensus sequence, where it cleaves and resolves the cruciform DNA. The protein is Holliday junction branch migration complex subunit RuvA of Metamycoplasma arthritidis (strain 158L3-1) (Mycoplasma arthritidis).